Consider the following 129-residue polypeptide: Protein UL131A (129 aa).

Residues 1 to 18 form the signal peptide; sequence MRLCRVWLSVCLCAVVLG.

In terms of assembly, forms the envelope pentamer complex (PC) composed of gH, gL, UL128, UL130, and UL131A. The pentamer interacts with host NRP2. The interaction with gH is important for the formation of UL128, UL130, gH-gL complex.

The protein localises to the virion membrane. Functionally, plays a role in viral entry into host cells. Forms a pentameric complex at the surface of the viral envelope together with gH, gL, UL130 and UL131. This complex is required for entry in epithelial, endothelial and myeloid host cells. Mechanistically, engages host receptor(s) including neurophilin 2/NRP2 to mediate infection. Contributes to the formation of the complex between UL128, UL130 and gH-gL. The chain is Protein UL131A (UL131A) from Human cytomegalovirus (strain Merlin) (HHV-5).